We begin with the raw amino-acid sequence, 103 residues long: Turripeptide OL55-like (103 aa).

Post-translationally, contains 8 disulfide bonds. As to expression, expressed by the venom duct.

It is found in the secreted. Functionally, acts as a neurotoxin by inhibiting an ion channel. In Lophiotoma albina (Sea snail), this protein is Turripeptide OL55-like.